The sequence spans 620 residues: Rhamnogalacturonan endolyase YesW (620 aa).

Positions 1-37 are cleaved as a signal peptide; the sequence is MRRSCLMIRRRKRMFTAVTLLVLLVMGTSVCPVKAEG. Positions 133–152 are disordered; that stretch reads LDKPAGGTTPKGESYTYSAN. Asn-152 contacts substrate. Residues Asp-153, Asp-158, Asp-160, Asp-162, Gln-164, and Glu-166 each contribute to the Ca(2+) site. Asp-172 contributes to the substrate binding site. Positions 187 and 207 each coordinate a carbohydrate. Ca(2+) contacts are provided by Asp-222, Asp-224, Asp-226, Lys-228, and Glu-230. A carbohydrate contacts are provided by Gly-238 and Arg-255. Ca(2+) contacts are provided by His-363, Asp-369, Asp-371, Asp-373, Lys-375, Glu-377, Asp-386, His-387, His-399, Asp-401, Asp-407, Asp-409, Arg-412, Gly-414, Glu-416, and Glu-422. Arg-452 contacts substrate. Ca(2+)-binding residues include Asp-457, Asp-459, Tyr-462, Gly-464, Glu-466, Asp-496, Asp-498, Leu-500, and Glu-502. Residue 532-534 coordinates substrate; that stretch reads NGT. Ca(2+) contacts are provided by Asp-543, Leu-545, Asp-547, Arg-549, Glu-551, Asn-592, and Ala-594. Tyr-595 contacts substrate. Ca(2+) is bound at residue Asn-596.

The protein belongs to the polysaccharide lyase 11 family. Monomer. Ca(2+) is required as a cofactor. The cofactor is Mn(2+).

The protein resides in the secreted. It catalyses the reaction Endotype eliminative cleavage of L-alpha-rhamnopyranosyl-(1-&gt;4)-alpha-D-galactopyranosyluronic acid bonds of rhamnogalacturonan I domains in ramified hairy regions of pectin leaving L-rhamnopyranose at the reducing end and 4-deoxy-4,5-unsaturated D-galactopyranosyluronic acid at the non-reducing end.. Pectinolytic enzyme that degrades type I rhamnogalacturonan from plant cell walls and releases oligosaccharide products. Degrades rhamnogalacturonan, polygalacturonic acid, pectic acid and pectin. The sequence is that of Rhamnogalacturonan endolyase YesW (yesW) from Bacillus subtilis (strain 168).